The sequence spans 456 residues: MDEDGEKRVRTKRLCSPESSDKKSGYEVDWVRDLPESLICHVLLNLSTKDVIKNCVLSTKWRYLWRYVPGLDLDCSDFTEYNTFVSFVDRFLSTNTESYLNKFKLGFDCDLVGDEETGNAQMARWINDVVKRKVQHLDLEWGALEIPPIVYVCKSLVSLKLCGVILPIPEFVCLPSVKVIVLDWVKFANDLALEMLISGCLVLKSLTLCRSNNDNVKVLRVRSQSLLSFNYNGPNTMGPEYEELIVEIDTPKLQDLTLSHRMTASFIIKNRSSLVGAHINIEFNFCFGEKFDPKNLPKREMIRNFLVGISGVKNMAIAACTLEVIYDYSRCEPLPLFRNLCLLSVEFYEDRWEMLPFFLESCPNLKSLVVGSNRYRMERTSIISGHRCLLSSLEYVEIETPLTGEVFEMKLVSYLLENSPILKKLTIHLHDNSRKKAECEILTIPRRSSSCQVILL.

A disordered region spans residues 1–23; it reads MDEDGEKRVRTKRLCSPESSDKK. The F-box domain maps to 28–74; it reads VDWVRDLPESLICHVLLNLSTKDVIKNCVLSTKWRYLWRYVPGLDLD. 4 LRR repeats span residues 136–163, 185–210, 234–260, and 347–372; these read HLDL…KLCG, VKFA…TLCR, PNTM…TLSH, and FYED…VVGS. Residues 377–429 enclose the FBD domain; sequence MERTSIISGHRCLLSSLEYVEIETPLTGEVFEMKLVSYLLENSPILKKLTIHL.

The polypeptide is Putative F-box/FBD/LRR-repeat protein At1g66300 (Arabidopsis thaliana (Mouse-ear cress)).